Reading from the N-terminus, the 224-residue chain is UPF0758 protein LCA_0852 (224 aa).

The region spanning 100 to 222 (VVASSQMVGQ…YLSLREEGYL (123 aa)) is the MPN domain. Zn(2+) is bound by residues histidine 171, histidine 173, and aspartate 184. Residues 171 to 184 (HNHPSGQLAPSTQD) carry the JAMM motif motif.

Belongs to the UPF0758 family.

The polypeptide is UPF0758 protein LCA_0852 (Latilactobacillus sakei subsp. sakei (strain 23K) (Lactobacillus sakei subsp. sakei)).